The primary structure comprises 587 residues: Complement component C8 beta chain (587 aa).

Residues 1–31 (MNHKLKPTVGLGYCLLCAALCLLLLRDVAIA) form the signal peptide. A propeptide spanning residues 32–44 (GSGEEPSGVREAR) is cleaved from the precursor. The TSP type-1 1 domain maps to 56 to 111 (DCVQSEWSSWTRCDVCRKKRYRYAKLVQPSQFGGEPCHVQGKEVEPCSPPSRYDCT). 5 disulfide bridges follow: Cys-57–Cys-92, Cys-68–Cys-102, Cys-71–Cys-110, Cys-118–Cys-129, and Cys-123–Cys-142. 2 C-linked (Man) tryptophan glycosylation sites follow: Trp-62 and Trp-65. In terms of domain architecture, LDL-receptor class A spans 117 to 159 (LCEGFLCTYTGRCVPIDLRCNGDDDCGDWSAEKGSPKVPKACK). Residues Leu-134, Asn-137, Asp-139, Asp-141, and Glu-148 each contribute to the Ca(2+) site. Residues 154 to 500 (VPKACKQEAQ…EYLEESSSCR (347 aa)) enclose the MACPF domain. Cys-158 and Cys-196 are oxidised to a cystine. Transmembrane regions (beta stranded) follow at residues 248 to 255 (TTVSIGFA), 258 to 265 (GVAEFGFN), 375 to 382 (EQIVLKVG), and 388 to 395 (VYVTVGLE). Cystine bridges form between Cys-374-Cys-399, Cys-499-Cys-546, Cys-501-Cys-517, Cys-504-Cys-519, and Cys-521-Cys-530. The EGF-like domain maps to 501–531 (CAPCRNNGLAVLKGTRCECVCPSGYSGLGCE). The TSP type-1 2 domain maps to 541 to 587 (DGSWSCWGSWSPCRGRSKTRSRQCNNPAPSSGGIACRGLQMETTDCF). Trp-547 and Trp-550 each carry a C-linked (Man) tryptophan glycan. Cys-553 and Cys-586 are oxidised to a cystine.

The protein belongs to the complement C6/C7/C8/C9 family. As to quaternary structure, heterotrimer of 3 chains: alpha (C8A), beta (C8B) and gamma (C8G); the alpha and gamma chains are disulfide bonded. Component of the membrane attack complex (MAC), composed of complement C5b, C6, C7, C8A, C8B, C8G and multiple copies of the pore-forming subunit C9.

Its subcellular location is the secreted. It is found in the target cell membrane. Functionally, component of the membrane attack complex (MAC), a multiprotein complex activated by the complement cascade, which inserts into a target cell membrane and forms a pore, leading to target cell membrane rupture and cell lysis. The MAC is initiated by proteolytic cleavage of C5 into complement C5b in response to the classical, alternative, lectin and GZMK complement pathways. The complement pathways consist in a cascade of proteins that leads to phagocytosis and breakdown of pathogens and signaling that strengthens the adaptive immune system. C8B, together with C8A and C8G, inserts into the target membrane, but does not form pores by itself. During MAC assembly, associates with C5b, C6 and C7 to form the C5b8 intermediate complex that inserts into the target membrane and traverses the bilayer increasing membrane rigidity. The chain is Complement component C8 beta chain (c8b) from Oncorhynchus mykiss (Rainbow trout).